A 131-amino-acid chain; its full sequence is D-ribose pyranase (131 aa).

His-20 serves as the catalytic Proton donor. Residues Asp-28, His-98, and 120–122 (YAN) each bind substrate.

It belongs to the RbsD / FucU family. RbsD subfamily. As to quaternary structure, homodecamer.

The protein resides in the cytoplasm. It carries out the reaction beta-D-ribopyranose = beta-D-ribofuranose. The protein operates within carbohydrate metabolism; D-ribose degradation; D-ribose 5-phosphate from beta-D-ribopyranose: step 1/2. Catalyzes the interconversion of beta-pyran and beta-furan forms of D-ribose. The chain is D-ribose pyranase from Bacillus cereus (strain 03BB102).